Here is a 483-residue protein sequence, read N- to C-terminus: Glutamyl-tRNA(Gln) amidotransferase subunit A (483 aa).

Residues Lys-76 and Ser-151 each act as charge relay system in the active site. Ser-175 acts as the Acyl-ester intermediate in catalysis.

Belongs to the amidase family. GatA subfamily. Heterotrimer of A, B and C subunits.

It catalyses the reaction L-glutamyl-tRNA(Gln) + L-glutamine + ATP + H2O = L-glutaminyl-tRNA(Gln) + L-glutamate + ADP + phosphate + H(+). Allows the formation of correctly charged Gln-tRNA(Gln) through the transamidation of misacylated Glu-tRNA(Gln) in organisms which lack glutaminyl-tRNA synthetase. The reaction takes place in the presence of glutamine and ATP through an activated gamma-phospho-Glu-tRNA(Gln). The protein is Glutamyl-tRNA(Gln) amidotransferase subunit A of Pseudomonas entomophila (strain L48).